Reading from the N-terminus, the 315-residue chain is PIH1 domain-containing protein 2 (315 aa).

The protein belongs to the PIH1 family.

The polypeptide is PIH1 domain-containing protein 2 (PIH1D2) (Homo sapiens (Human)).